We begin with the raw amino-acid sequence, 313 residues long: Olfactory receptor 4M1 (313 aa).

The Extracellular segment spans residues 1–25 (MEPANDTTVTEFILTGLSQTREVQL). A glycan (N-linked (GlcNAc...) asparagine) is linked at asparagine 5. The chain crosses the membrane as a helical span at residues 26 to 46 (VLFVIFLSFYLFILPVNILII). The Cytoplasmic segment spans residues 47–57 (CTIRLDSHLSS). The helical transmembrane segment at 58–78 (PMYFLLANLAFLDIWYSSITA) threads the bilayer. Over 79 to 97 (PKMLVDFFVERKIISFGGC) the chain is Extracellular. Cysteine 97 and cysteine 179 form a disulfide bridge. The chain crosses the membrane as a helical span at residues 98-118 (IAQLFFLHFVGASEMFLLTVM). At 119-142 (AFDRYAAICRPLHYATIMNRRLCC) the chain is on the cytoplasmic side. Residues 143 to 163 (ILVALSWTGGFVHSIIQVALI) traverse the membrane as a helical segment. Over 164–204 (VRLPFCGPNELDNYFCDITQVVRIACANTFLEEMVMIFSSG) the chain is Extracellular. A helical transmembrane segment spans residues 205 to 225 (LISVVCFIALLMSYAFLLTML). Residues 226 to 238 (KKHSSSGESTSRA) are Cytoplasmic-facing. The chain crosses the membrane as a helical span at residues 239-259 (ISTCYSHITIVVLMFGPSIYI). The Extracellular segment spans residues 260–270 (YARPFDSFSLD). The helical transmembrane segment at 271–291 (KVVSVFHTVIFPLLNPIIYTL) threads the bilayer. Topologically, residues 292-313 (RNKEVKAAMRKLVNRYIFCKEK) are cytoplasmic.

This sequence belongs to the G-protein coupled receptor 1 family. As to expression, highly expressed in liver but not in adipose tissue. Also expressed at high level in testis.

The protein resides in the cell membrane. In terms of biological role, olfactory receptor that acts as a receptor of Asprosin hormone at the surface of hepatocytes to promote hepatocyte glucose release. Also binds Asprosin in the arcuate nucleus of the hypothalamus, thereby stimulating appetite by promoting orexigenic AgRP neuronal activity. In testis, Asprosin-binding promotes sperm progressive motility and enhances male fertility. The activity of this receptor is mediated by G proteins which activate adenylyl cyclase, resulting in an elevation of intracellular cAMP. The polypeptide is Olfactory receptor 4M1 (Mus musculus (Mouse)).